The sequence spans 255 residues: tRNA (guanine-N(1)-)-methyltransferase (255 aa).

Residues G113 and 133-138 (IGDYVL) each bind S-adenosyl-L-methionine.

It belongs to the RNA methyltransferase TrmD family. In terms of assembly, homodimer.

Its subcellular location is the cytoplasm. It carries out the reaction guanosine(37) in tRNA + S-adenosyl-L-methionine = N(1)-methylguanosine(37) in tRNA + S-adenosyl-L-homocysteine + H(+). Functionally, specifically methylates guanosine-37 in various tRNAs. In Salmonella paratyphi A (strain ATCC 9150 / SARB42), this protein is tRNA (guanine-N(1)-)-methyltransferase.